We begin with the raw amino-acid sequence, 353 residues long: Photosystem II D2 protein (353 aa).

N-acetylthreonine is present on Thr-2. Thr-2 bears the Phosphothreonine mark. The chain crosses the membrane as a helical span at residues 41-61 (CAYFALGGWFTGTTFVTSWYT). His-118 contributes to the chlorophyll a binding site. Residues 125 to 141 (GFMLRQFELARSVQLRP) traverse the membrane as a helical segment. 2 residues coordinate pheophytin a: Gln-130 and Asn-143. The helical transmembrane segment at 153–166 (VFVSVFLIYPLGQS) threads the bilayer. His-198 lines the chlorophyll a pocket. Residues 208–228 (AALLCAIHGATVENTLFEDGD) traverse the membrane as a helical segment. Residues His-215 and Phe-262 each coordinate a plastoquinone. His-215 contacts Fe cation. His-269 is a binding site for Fe cation. The chain crosses the membrane as a helical span at residues 279 to 295 (GLWMSAIGVVGLALNLR).

It belongs to the reaction center PufL/M/PsbA/D family. In terms of assembly, PSII is composed of 1 copy each of membrane proteins PsbA, PsbB, PsbC, PsbD, PsbE, PsbF, PsbH, PsbI, PsbJ, PsbK, PsbL, PsbM, PsbT, PsbX, PsbY, PsbZ, Psb30/Ycf12, at least 3 peripheral proteins of the oxygen-evolving complex and a large number of cofactors. It forms dimeric complexes. The cofactor is The D1/D2 heterodimer binds P680, chlorophylls that are the primary electron donor of PSII, and subsequent electron acceptors. It shares a non-heme iron and each subunit binds pheophytin, quinone, additional chlorophylls, carotenoids and lipids. There is also a Cl(-1) ion associated with D1 and D2, which is required for oxygen evolution. The PSII complex binds additional chlorophylls, carotenoids and specific lipids.. Phosphorylated on threonine residue(s); phosphorylation increases with increasing light levels.

The protein localises to the plastid. Its subcellular location is the chloroplast thylakoid membrane. The catalysed reaction is 2 a plastoquinone + 4 hnu + 2 H2O = 2 a plastoquinol + O2. Functionally, photosystem II (PSII) is a light-driven water:plastoquinone oxidoreductase that uses light energy to abstract electrons from H(2)O, generating O(2) and a proton gradient subsequently used for ATP formation. It consists of a core antenna complex that captures photons, and an electron transfer chain that converts photonic excitation into a charge separation. The D1/D2 (PsbA/PsbD) reaction center heterodimer binds P680, the primary electron donor of PSII as well as several subsequent electron acceptors. D2 is needed for assembly of a stable PSII complex. The polypeptide is Photosystem II D2 protein (Marchantia polymorpha (Common liverwort)).